Here is a 1021-residue protein sequence, read N- to C-terminus: Sodium/potassium-transporting ATPase subunit alpha-1 (1021 aa).

Residues 1-5 constitute a propeptide that is removed on maturation; that stretch reads MGKGV. Basic and acidic residues predominate over residues 1 to 11; it reads MGKGVGRDKYE. Residues 1–37 are disordered; sequence MGKGVGRDKYEPAAVSEHGDKKKAKKERDMDELKKEV. Residues 6–85 are Cytoplasmic-facing; that stretch reads GRDKYEPAAV…NALTPPPTTP (80 aa). The residue at position 9 (K9) is an N6-acetyllysine. A Phosphotyrosine modification is found at Y10. The residue at position 16 (S16) is a Phosphoserine; by PKC. K21 is modified (N6-acetyllysine). Residues 26 to 37 show a composition bias toward basic and acidic residues; that stretch reads KERDMDELKKEV. Phosphoserine is present on residues S38 and S45. The segment at 80-82 is phosphoinositide-3 kinase binding; the sequence is PPP. A helical transmembrane segment spans residues 86–106; that stretch reads EWVKFCRQLFGGFSMLLWIGA. At 107-129 the chain is on the extracellular side; that stretch reads ILCFLAYGIQAATEEEPQNDNLY. A helical membrane pass occupies residues 130–150; it reads LGVVLSAVVIITGCFSYYQEA. At 151–286 the chain is on the cytoplasmic side; that stretch reads KSSKIMESFK…GGQTPIAAEI (136 aa). A disordered region spans residues 214-233; that stretch reads SSLTGESEPQTRSPDFTNEN. The residue at position 226 (S226) is a Phosphoserine. The residue at position 258 (Y258) is a Phosphotyrosine. The chain crosses the membrane as a helical span at residues 287 to 306; sequence EHFIHIITGVAVFLGVSFFI. Residues 307–318 are Extracellular-facing; the sequence is LSLILEYTWLEA. The helical transmembrane segment at 319 to 336 threads the bilayer; the sequence is VIFLIGIIVANVPEGLLA. The Cytoplasmic segment spans residues 337-770; the sequence is TVTVCLTLTA…EEGRLIFDNL (434 aa). D374 (4-aspartylphosphate intermediate) is an active-site residue. S450 and S482 each carry phosphoserine. ATP is bound at residue K485. Residue Y540 is modified to Phosphotyrosine. Positions 594 to 715 are mediates interaction with SCN7A; the sequence is RAAVPDAVGK…QGAIVAVTGD (122 aa). Position 659 is an N6-succinyllysine (K659). Phosphoserine is present on residues S666 and S673. Residues D715 and D719 each contribute to the Mg(2+) site. A helical membrane pass occupies residues 771 to 790; that stretch reads KKSIAYTLTSNIPEITPFLI. The Extracellular portion of the chain corresponds to 791-800; it reads FIIANIPLPL. The chain crosses the membrane as a helical span at residues 801–821; sequence GTVTILCIDLGTDMVPAISLA. The Cytoplasmic portion of the chain corresponds to 822-841; that stretch reads YEQAESDIMKRQPRNPKTDK. Residues 842–864 form a helical membrane-spanning segment; it reads LVNEQLISMAYGQIGMIQALGGF. Residues 865 to 916 lie on the Extracellular side of the membrane; sequence FTYFVILAENGFLPIHLLGLRVNWDDRWINDVEDSYGQQWTYEQRKIVEFTC. A helical transmembrane segment spans residues 917–936; sequence HTPFFVTIVVVQWADLVICK. At 937–949 the chain is on the cytoplasmic side; sequence TRRNSVFQQGMKN. S941 carries the phosphoserine; by PKA modification. A helical transmembrane segment spans residues 950 to 968; it reads KILIFGLFEETALAAFLSY. Over 969-983 the chain is Extracellular; the sequence is CPGMGVALRMYPLKP. A helical transmembrane segment spans residues 984 to 1004; that stretch reads TWWFCAFPYSLLIFVYDEVRK. At 1005 to 1021 the chain is on the cytoplasmic side; the sequence is LIIRRRPGGWVEKETYY.

It belongs to the cation transport ATPase (P-type) (TC 3.A.3) family. Type IIC subfamily. In terms of assembly, the sodium/potassium-transporting ATPase is composed of a catalytic alpha subunit, an auxiliary non-catalytic beta subunit and an additional regulatory subunit. Interacts with regulatory subunit FXYD1. Interacts with regulatory subunit FXYD3. Interacts with SIK1. Interacts with SLC35G1 and STIM1. Interacts with CLN3; this interaction regulates the sodium/potassium-transporting ATPase complex localization at the plasma membrane. Interacts with SCN7A; activates ATP1A1 P-type sodium:potassium-exchanging transporter activity which indirectly signals to nearby neurons to regulate sodium homeostasis. Post-translationally, phosphorylation on Tyr-10 modulates pumping activity. Phosphorylation of Ser-941 by PKA modulates the response of ATP1A1 to PKC. Dephosphorylation by protein phosphatase 2A (PP2A) following increases in intracellular sodium, leading to increase catalytic activity.

It localises to the cell membrane. It is found in the basolateral cell membrane. Its subcellular location is the sarcolemma. The protein localises to the cell projection. The protein resides in the axon. It localises to the melanosome. The catalysed reaction is K(+)(out) + Na(+)(in) + ATP + H2O = K(+)(in) + Na(+)(out) + ADP + phosphate + H(+). In terms of biological role, this is the catalytic component of the active enzyme, which catalyzes the hydrolysis of ATP coupled with the exchange of sodium and potassium ions across the plasma membrane. This action creates the electrochemical gradient of sodium and potassium ions, providing the energy for active transport of various nutrients. Could also be part of an osmosensory signaling pathway that senses body-fluid sodium levels and controls salt intake behavior as well as voluntary water intake to regulate sodium homeostasis. The sequence is that of Sodium/potassium-transporting ATPase subunit alpha-1 (ATP1A1) from Sus scrofa (Pig).